We begin with the raw amino-acid sequence, 210 residues long: Large ribosomal subunit protein uL4 (210 aa).

The segment at 46-89 (QGTASTLTRSEVRGGGRKPYKQKGTGRARQGSIRTPLRPGGGII) is disordered. Residues 60–71 (GGRKPYKQKGTG) are compositionally biased toward basic residues.

This sequence belongs to the universal ribosomal protein uL4 family. As to quaternary structure, part of the 50S ribosomal subunit.

Functionally, one of the primary rRNA binding proteins, this protein initially binds near the 5'-end of the 23S rRNA. It is important during the early stages of 50S assembly. It makes multiple contacts with different domains of the 23S rRNA in the assembled 50S subunit and ribosome. Forms part of the polypeptide exit tunnel. The chain is Large ribosomal subunit protein uL4 from Prochlorococcus marinus (strain MIT 9312).